We begin with the raw amino-acid sequence, 164 residues long: MD-2-related lipid-recognition protein 3 (164 aa).

Residues 1–24 (MAMSHVQPMLLLLVSLFFLPALRG) form the signal peptide.

Interacts with RUB1/NEDD8. In terms of processing, neddylated. Post-translationally, ubiquitinated.

The protein localises to the vacuole. It localises to the endoplasmic reticulum. In terms of biological role, may be involved in herbivory-mediated responses. May play a role in herbivory-associated molecular pattern (HAMP) recognition. May function is jasmonate (JA) signaling in response to HAMP. May play a role in defense response against the pathogens Altenaria brassicicola and Pseudomonas syringae. This Arabidopsis thaliana (Mouse-ear cress) protein is MD-2-related lipid-recognition protein 3.